The sequence spans 70 residues: Protein FlmC homolog (70 aa).

Residues 1-21 (MSSPHQDSLLPRFAQGEEGHE) are disordered.

In Escherichia coli, this protein is Protein FlmC homolog.